The sequence spans 332 residues: Glycerol-3-phosphate dehydrogenase [NAD(P)+] (332 aa).

Trp-15, Arg-35, and Lys-108 together coordinate NADPH. Positions 108, 137, and 139 each coordinate sn-glycerol 3-phosphate. Ala-141 is a binding site for NADPH. Sn-glycerol 3-phosphate contacts are provided by Lys-192, Asp-245, Ser-255, Arg-256, and Asn-257. Lys-192 functions as the Proton acceptor in the catalytic mechanism. Arg-256 serves as a coordination point for NADPH. Residues Leu-278 and Glu-280 each coordinate NADPH.

Belongs to the NAD-dependent glycerol-3-phosphate dehydrogenase family.

It is found in the cytoplasm. It carries out the reaction sn-glycerol 3-phosphate + NAD(+) = dihydroxyacetone phosphate + NADH + H(+). It catalyses the reaction sn-glycerol 3-phosphate + NADP(+) = dihydroxyacetone phosphate + NADPH + H(+). It participates in membrane lipid metabolism; glycerophospholipid metabolism. Its function is as follows. Catalyzes the reduction of the glycolytic intermediate dihydroxyacetone phosphate (DHAP) to sn-glycerol 3-phosphate (G3P), the key precursor for phospholipid synthesis. The sequence is that of Glycerol-3-phosphate dehydrogenase [NAD(P)+] from Methylobacterium radiotolerans (strain ATCC 27329 / DSM 1819 / JCM 2831 / NBRC 15690 / NCIMB 10815 / 0-1).